Reading from the N-terminus, the 432-residue chain is Probable D-serine dehydratase (432 aa).

Lys-112 is subject to N6-(pyridoxal phosphate)lysine.

Belongs to the serine/threonine dehydratase family. DsdA subfamily. Requires pyridoxal 5'-phosphate as cofactor.

It catalyses the reaction D-serine = pyruvate + NH4(+). The sequence is that of Probable D-serine dehydratase from Pediococcus pentosaceus (strain ATCC 25745 / CCUG 21536 / LMG 10740 / 183-1w).